We begin with the raw amino-acid sequence, 163 residues long: Large ribosomal subunit protein uL11 (163 aa).

It belongs to the universal ribosomal protein uL11 family. In terms of assembly, part of the ribosomal stalk of the 50S ribosomal subunit. Interacts with L10 and the large rRNA to form the base of the stalk. L10 forms an elongated spine to which L12 dimers bind in a sequential fashion forming a multimeric L10(L12)X complex.

Its function is as follows. Forms part of the ribosomal stalk which helps the ribosome interact with GTP-bound translation factors. This chain is Large ribosomal subunit protein uL11, found in Thermococcus onnurineus (strain NA1).